Consider the following 135-residue polypeptide: Mini-ribonuclease 3 (135 aa).

The active site involves Asp-19.

This sequence belongs to the MrnC RNase family. As to quaternary structure, homodimer. Mg(2+) serves as cofactor.

Its subcellular location is the cytoplasm. Functionally, involved in correct processing of both the 5' and 3' ends of 23S rRNA precursor. Processes 30S rRNA precursor transcript even in absence of ribonuclease 3 (Rnc); Rnc processes 30S rRNA into smaller rRNA precursors. The protein is Mini-ribonuclease 3 of Gloeobacter violaceus (strain ATCC 29082 / PCC 7421).